The chain runs to 62 residues: Large ribosomal subunit protein bL28 (62 aa).

Belongs to the bacterial ribosomal protein bL28 family.

The protein is Large ribosomal subunit protein bL28 of Wolinella succinogenes (strain ATCC 29543 / DSM 1740 / CCUG 13145 / JCM 31913 / LMG 7466 / NCTC 11488 / FDC 602W) (Vibrio succinogenes).